Consider the following 342-residue polypeptide: NLP effector protein Pc107869 (342 aa).

The signal sequence occupies residues 1 to 19 (MKTGFFLFAACAALVAVQA). The N-linked (GlcNAc...) asparagine glycan is linked to asparagine 24. A disordered region spans residues 41–125 (APRTKAPPTK…PTPDPGPWEA (85 aa)). Residues 55-75 (QQSSLSGSQEQQQEQIETPAP) are compositionally biased toward low complexity. The segment covering 93-121 (TPAPTPAPTPAPTPAPTPAPTPAPTPDPG) has biased composition (pro residues). The Hepta-peptide GHRHDWE motif motif lies at 226–232 (GHRHDWE).

The protein belongs to the Necrosis inducing protein (NPP1) family.

The protein localises to the secreted. Functionally, secreted effector that contributes strongly to virulence during infection by P.capsici. Induces cell death in the Solanaceae, including Nicotiana benthamiana. This is NLP effector protein Pc107869 from Phytophthora capsici.